Consider the following 241-residue polypeptide: Phosphatidylglycerophosphatase B (241 aa).

The helical transmembrane segment at 1 to 21 (MFKRLSLYTLLLCLVPFFIWG) threads the bilayer. At 22–52 (ISYQWHGNSQLTQADYWLYLLTETGSVPYAL) the chain is on the periplasmic side. Residues 53 to 62 (ITCVLFTLLF) form a helical membrane-spanning segment. Over 63-67 (AFLFK) the chain is Cytoplasmic. A helical transmembrane segment spans residues 68–91 (NPKQWILGVIVMGISVIATQAAKT). At 92–158 (GAKALFEEPR…ENETGYSFPS (67 aa)) the chain is on the periplasmic side. Residues 94 to 102 (KALFEEPRP) form a phosphatase sequence motif I region. Residues 157–160 (PSGH) are phosphatase sequence motif II. The helical transmembrane segment at 159-173 (GHTIFAATWLMLAVG) threads the bilayer. Residue His-160 is the Proton donor; for a subset of substrates of the active site. Residues 174–184 (FTQLLGNRSFK) are Cytoplasmic-facing. A helical transmembrane segment spans residues 185-204 (AKLLVVGIAVWGLLMLISRV). A phosphatase sequence motif III region spans residues 202 to 213 (SRVRLGMHYPID). Over 205 to 210 (RLGMHY) the chain is Periplasmic. The Nucleophile role is filled by His-209. The chain crosses the membrane as a helical span at residues 211-235 (PIDLLVATLLAWLINSIIFAFLKKK). Topologically, residues 236-241 (AIFVMK) are cytoplasmic.

It belongs to the PA-phosphatase related phosphoesterase family.

The protein localises to the cell inner membrane. The protein resides in the cell outer membrane. It carries out the reaction a 1,2-diacyl-sn-glycero-3-phospho-(1'-sn-glycero-3'-phosphate) + H2O = a 1,2-diacyl-sn-glycero-3-phospho-(1'-sn-glycerol) + phosphate. The catalysed reaction is a 1,2-diacyl-sn-glycerol 3-diphosphate + H2O = a 1,2-diacyl-sn-glycero-3-phosphate + phosphate + H(+). The enzyme catalyses a 1,2-diacyl-sn-glycero-3-phosphate + H2O = a 1,2-diacyl-sn-glycerol + phosphate. It catalyses the reaction di-trans,octa-cis-undecaprenyl diphosphate + H2O = di-trans,octa-cis-undecaprenyl phosphate + phosphate + H(+). Its pathway is phospholipid metabolism; phosphatidylglycerol biosynthesis; phosphatidylglycerol from CDP-diacylglycerol: step 2/2. Its function is as follows. Catalyzes the dephosphorylation of diacylglycerol diphosphate (DGPP) to phosphatidate (PA) and the subsequent dephosphorylation of PA to diacylglycerol (DAG). Also has undecaprenyl pyrophosphate phosphatase activity, required for the biosynthesis of the lipid carrier undecaprenyl phosphate. Can also use lysophosphatidic acid (LPA) and phosphatidylglycerophosphate as substrates. The pattern of activities varies according to subcellular location, PGP phosphatase activity is higher in the cytoplasmic membrane, whereas PA and LPA phosphatase activities are higher in the outer membrane. Activity is independent of a divalent cation ion and insensitive to inhibition by N-ethylmaleimide. This is Phosphatidylglycerophosphatase B (pgpB) from Haemophilus influenzae (strain ATCC 51907 / DSM 11121 / KW20 / Rd).